A 102-amino-acid chain; its full sequence is NADH-quinone oxidoreductase subunit K (102 aa).

The next 3 membrane-spanning stretches (helical) occupy residues 4-24 (IPME…LVGL), 30-50 (MLFV…AFIV), and 62-82 (VMFL…LALL).

This sequence belongs to the complex I subunit 4L family. As to quaternary structure, NDH-1 is composed of 14 different subunits. Subunits NuoA, H, J, K, L, M, N constitute the membrane sector of the complex.

It is found in the cell inner membrane. The enzyme catalyses a quinone + NADH + 5 H(+)(in) = a quinol + NAD(+) + 4 H(+)(out). NDH-1 shuttles electrons from NADH, via FMN and iron-sulfur (Fe-S) centers, to quinones in the respiratory chain. The immediate electron acceptor for the enzyme in this species is believed to be ubiquinone. Couples the redox reaction to proton translocation (for every two electrons transferred, four hydrogen ions are translocated across the cytoplasmic membrane), and thus conserves the redox energy in a proton gradient. This Chromohalobacter salexigens (strain ATCC BAA-138 / DSM 3043 / CIP 106854 / NCIMB 13768 / 1H11) protein is NADH-quinone oxidoreductase subunit K.